We begin with the raw amino-acid sequence, 357 residues long: DNA replication and repair protein RecF (357 aa).

30 to 37 (GANGSGKT) lines the ATP pocket.

Belongs to the RecF family.

The protein localises to the cytoplasm. Functionally, the RecF protein is involved in DNA metabolism; it is required for DNA replication and normal SOS inducibility. RecF binds preferentially to single-stranded, linear DNA. It also seems to bind ATP. The polypeptide is DNA replication and repair protein RecF (Salmonella agona (strain SL483)).